Consider the following 747-residue polypeptide: MSERQIHSVSMELAGRTLTLEAGRFAEQANGAVVVRYGDTMLLATAVASKEPRADADFFPLTVDYEEKMYAAGKIPGSFFKREGKPTDSAILTARLTDRPLRPLFPEGYRNEVQIIVTTFSIDMVNDPAPLAIIGASAALAISDIPFLGPVGAVQVGYIDGKVQINPEMPDMPNSDLDLVVAGTKDAVLMVEAGAKELPEDLMLEAIIQGHQVCKQICDLQNELVRLAGRPKREFVPPPVDTSLEEAIQQWLGNRLYEAITDPNKMVRDAQTEALKQEVIAHFTADEPEEELEARIAAVSTAFENLLYEEVRRMILERGERVDGRGPKDIRPISIEVGLIPRVHGSGLFTRGQTQVLTLATLGSPAEEQRLDDLGIETTKRYIHHYNFPPFSTGEVRRLGSPRRRDIGHGALAERSLLAVLPSKEEFPYTMRLVSETLSSNGSSSMASVCGSSLALMDAGVPIKAPVAGVAMGLITGKDGRWRVLTDIQGIEDHLGDMDFKVAGTAKGVTGLQLDIKTTGITYEIMREAFAQAREGRLYILDKMNAVISEPRKELSPYAPRIITLQINPEKIGALIGPGGKTVRGITEATGAQIDIEEDGRVYISTPDAAAAQQAVAMVEALTREIKVGDIFLGKVVRIMPFGAFVNLAPGKDGMVHVSELDVGRVENVEDVIKMGDEINVMVIGIEPGTGKVSLSRRALLTGETAEDRRAAGAGRGLRDGGGRSGGSDRGGDRGPRGDDRQRPRRR.

Residues aspartate 493 and aspartate 499 each coordinate Mg(2+). A KH domain is found at 560–619 (PRIITLQINPEKIGALIGPGGKTVRGITEATGAQIDIEEDGRVYISTPDAAAAQQAVAMV). The S1 motif domain maps to 629 to 698 (GDIFLGKVVR…GTGKVSLSRR (70 aa)). Residues 705-747 (TAEDRRAAGAGRGLRDGGGRSGGSDRGGDRGPRGDDRQRPRRR) form a disordered region. 2 stretches are compositionally biased toward basic and acidic residues: residues 706–722 (AEDR…RDGG) and 730–747 (RGGD…PRRR).

The protein belongs to the polyribonucleotide nucleotidyltransferase family. Requires Mg(2+) as cofactor.

It is found in the cytoplasm. The catalysed reaction is RNA(n+1) + phosphate = RNA(n) + a ribonucleoside 5'-diphosphate. Its function is as follows. Involved in mRNA degradation. Catalyzes the phosphorolysis of single-stranded polyribonucleotides processively in the 3'- to 5'-direction. In Roseiflexus sp. (strain RS-1), this protein is Polyribonucleotide nucleotidyltransferase.